Here is a 91-residue protein sequence, read N- to C-terminus: DNA-directed RNA polymerase subunit Rpo11 (91 aa).

It belongs to the archaeal Rpo11/eukaryotic RPB11/RPC19 RNA polymerase subunit family. Part of the RNA polymerase complex.

The protein localises to the cytoplasm. The catalysed reaction is RNA(n) + a ribonucleoside 5'-triphosphate = RNA(n+1) + diphosphate. In terms of biological role, DNA-dependent RNA polymerase (RNAP) catalyzes the transcription of DNA into RNA using the four ribonucleoside triphosphates as substrates. In Methanothrix thermoacetophila (strain DSM 6194 / JCM 14653 / NBRC 101360 / PT) (Methanosaeta thermophila), this protein is DNA-directed RNA polymerase subunit Rpo11.